The chain runs to 244 residues: Thiol S-methyltransferase TMT1B (244 aa).

Residues 1-23 form the signal peptide; the sequence is MDALVLFLQLLVLLLTLPLHLLA.

The protein belongs to the methyltransferase superfamily.

Its subcellular location is the endoplasmic reticulum membrane. It is found in the lipid droplet. The protein resides in the microsome. It localises to the cytoplasm. The protein localises to the cytosol. It carries out the reaction a thiol + S-adenosyl-L-methionine = a methyl thioether + S-adenosyl-L-homocysteine + H(+). Functionally, thiol S-methyltransferase that catalyzes the transfer of a methyl group from S-adenosyl-L-methionine to alkyl and phenolic thiol-containing acceptor substrates. Together with TMT1B accounts for most of S-thiol methylation activity in the endoplasmic reticulum of hepatocytes. Selectively methylates S-centered nucleophiles from metabolites such as hydrogen sulfide and dithiothreitol. The chain is Thiol S-methyltransferase TMT1B from Mus musculus (Mouse).